Consider the following 209-residue polypeptide: Ubiquitin-conjugating enzyme E2 S (209 aa).

Positions 14 to 160 (QTIRQVMREL…ARMMTEIHAQ (147 aa)) constitute a UBC core domain. C98 serves as the catalytic Glycyl thioester intermediate. Positions 165–194 (GVGAASDAKDDDGPSTKKHAGLDKKLQDKK) are disordered. Basic and acidic residues predominate over residues 171–194 (DAKDDDGPSTKKHAGLDKKLQDKK).

The protein belongs to the ubiquitin-conjugating enzyme family.

The catalysed reaction is S-ubiquitinyl-[E1 ubiquitin-activating enzyme]-L-cysteine + [E2 ubiquitin-conjugating enzyme]-L-cysteine = [E1 ubiquitin-activating enzyme]-L-cysteine + S-ubiquitinyl-[E2 ubiquitin-conjugating enzyme]-L-cysteine.. It participates in protein modification; protein ubiquitination. In terms of biological role, catalyzes the covalent attachment of ubiquitin to other proteins. Acts as an essential factor of the anaphase promoting complex/cyclosome (APC/C), a cell cycle-regulated ubiquitin ligase that controls progression through mitosis. Acts by specifically elongating polyubiquitin chains initiated by the E2 enzyme vih/UbcH10 on APC/C substrates, enhancing the degradation of APC/C substrates by the proteasome and promoting mitotic exit. This Drosophila persimilis (Fruit fly) protein is Ubiquitin-conjugating enzyme E2 S.